Reading from the N-terminus, the 434-residue chain is O-phosphoseryl-tRNA(Sec) selenium transferase (434 aa).

Residues 1 to 40 (MGLNITGLIPKHMENRGKLTLKENLKIIENILEQRKAPEN) are tetramerization. Arginine 71 contributes to the pyridoxal 5'-phosphate binding site. Residues 92–102 (GRSGNLIDPQP) form a phosphate loop (P-loop) region. Residues arginine 93, serine 94, and glutamine 101 each contribute to the substrate site. N6-(pyridoxal phosphate)lysine is present on lysine 277. Residue arginine 306 participates in substrate binding.

Belongs to the SepSecS family. Homotetramer. Pyridoxal 5'-phosphate is required as a cofactor.

It carries out the reaction O-phospho-L-seryl-tRNA(Sec) + selenophosphate + H2O = L-selenocysteinyl-tRNA(Sec) + 2 phosphate. It functions in the pathway aminoacyl-tRNA biosynthesis; selenocysteinyl-tRNA(Sec) biosynthesis; selenocysteinyl-tRNA(Sec) from L-seryl-tRNA(Sec) (archaeal/eukaryal route): step 2/2. In terms of biological role, converts O-phosphoseryl-tRNA(Sec) to selenocysteinyl-tRNA(Sec) required for selenoprotein biosynthesis. The chain is O-phosphoseryl-tRNA(Sec) selenium transferase (spcS) from Methanocaldococcus jannaschii (strain ATCC 43067 / DSM 2661 / JAL-1 / JCM 10045 / NBRC 100440) (Methanococcus jannaschii).